The following is a 38-amino-acid chain: Cytochrome b6-f complex subunit 5 (38 aa).

A helical transmembrane segment spans residues 5–25 (LLCGIVLGLIPVTLLGLFVAA).

It belongs to the PetG family. As to quaternary structure, the 4 large subunits of the cytochrome b6-f complex are cytochrome b6, subunit IV (17 kDa polypeptide, PetD), cytochrome f and the Rieske protein, while the 4 small subunits are PetG, PetL, PetM and PetN. The complex functions as a dimer.

It localises to the cellular thylakoid membrane. Functionally, component of the cytochrome b6-f complex, which mediates electron transfer between photosystem II (PSII) and photosystem I (PSI), cyclic electron flow around PSI, and state transitions. PetG is required for either the stability or assembly of the cytochrome b6-f complex. This Parasynechococcus marenigrum (strain WH8102) protein is Cytochrome b6-f complex subunit 5.